The following is a 379-amino-acid chain: Glutamate 5-kinase (379 aa).

K15 provides a ligand contact to ATP. The substrate site is built by S56, D143, and N155. Position 175-176 (175-176 (SD)) interacts with ATP. A PUA domain is found at 281–358 (RGTLAIDAGA…SDAAQLLGVR (78 aa)).

The protein belongs to the glutamate 5-kinase family.

It is found in the cytoplasm. It catalyses the reaction L-glutamate + ATP = L-glutamyl 5-phosphate + ADP. It functions in the pathway amino-acid biosynthesis; L-proline biosynthesis; L-glutamate 5-semialdehyde from L-glutamate: step 1/2. Its function is as follows. Catalyzes the transfer of a phosphate group to glutamate to form L-glutamate 5-phosphate. The sequence is that of Glutamate 5-kinase from Nitrobacter winogradskyi (strain ATCC 25391 / DSM 10237 / CIP 104748 / NCIMB 11846 / Nb-255).